A 285-amino-acid chain; its full sequence is Putative ankyrin repeat protein R551 (285 aa).

4 ANK repeats span residues 99–129, 157–186, 188–214, and 215–249; these read DLKS…PIKI, NDFD…LQDE, IGKI…EAFR, and SAPD…CIQQ.

This Acanthamoeba polyphaga (Amoeba) protein is Putative ankyrin repeat protein R551.